The chain runs to 378 residues: MDSAVSDPHNGSAEAGTPANGTTRPPSTPEGIALAYGSLLLMALLPIFFGALRSVRCARGKSSSDMPETITSRDAARFPIIASCTLLGLYLFFKIFSQEYINLLLSMYFFVLGILALSHTISPFMNKFFPANFPNRQYQLLFTQGSGENKEEIINYEFDTKDLVCLGLSSVVGVWYLLRKHWIANNLFGLAFSLNGVELLHLNNVSTGCILLGGLFIYDIFWVFGTNVMVTVAKSFEAPIKLVFPQDLLEKGLEADNFAMLGLGDIVIPGIFIALLLRFDISLKKNTHTYFYTSFAAYIFGLGLTIFIMHIFKHAQPALLYLVPACIGFPVLVALAKGEVAEMFSYEESNPKDPAAETESKEESTEASASKRLEKKEK.

A disordered region spans residues 1-27 (MDSAVSDPHNGSAEAGTPANGTTRPPS). At 1–31 (MDSAVSDPHNGSAEAGTPANGTTRPPSTPEG) the chain is on the lumenal side. Residues Asn10 and Asn20 are each glycosylated (N-linked (GlcNAc...) asparagine). Residues 32–52 (IALAYGSLLLMALLPIFFGAL) form a helical membrane-spanning segment. At 53–77 (RSVRCARGKSSSDMPETITSRDAAR) the chain is on the cytoplasmic side. Residues 78-98 (FPIIASCTLLGLYLFFKIFSQ) traverse the membrane as a helical segment. Over 99–100 (EY) the chain is Lumenal. The helical transmembrane segment at 101–121 (INLLLSMYFFVLGILALSHTI) threads the bilayer. Residues 122-157 (SPFMNKFFPANFPNRQYQLLFTQGSGENKEEIINYE) lie on the Cytoplasmic side of the membrane. A helical transmembrane segment spans residues 158 to 178 (FDTKDLVCLGLSSVVGVWYLL). The Lumenal segment spans residues 179 to 181 (RKH). Residues 182–202 (WIANNLFGLAFSLNGVELLHL) form a helical membrane-spanning segment. Over 203–209 (NNVSTGC) the chain is Cytoplasmic. The helical transmembrane segment at 210–230 (ILLGGLFIYDIFWVFGTNVMV) threads the bilayer. Asp219 is a catalytic residue. The Lumenal portion of the chain corresponds to 231–256 (TVAKSFEAPIKLVFPQDLLEKGLEAD). The helical transmembrane segment at 257 to 277 (NFAMLGLGDIVIPGIFIALLL) threads the bilayer. The active site involves Asp265. The Cytoplasmic segment spans residues 278–290 (RFDISLKKNTHTY). A helical transmembrane segment spans residues 291–311 (FYTSFAAYIFGLGLTIFIMHI). Residues 312–314 (FKH) are Lumenal-facing. The chain crosses the membrane as a helical span at residues 315–335 (AQPALLYLVPACIGFPVLVAL). The PAL signature appears at 317–319 (PAL). The Cytoplasmic segment spans residues 336 to 378 (AKGEVAEMFSYEESNPKDPAAETESKEESTEASASKRLEKKEK). Positions 346-378 (YEESNPKDPAAETESKEESTEASASKRLEKKEK) are disordered. Over residues 349 to 378 (SNPKDPAAETESKEESTEASASKRLEKKEK) the composition is skewed to basic and acidic residues. Ser368 carries the phosphoserine modification.

Belongs to the peptidase A22B family. In terms of assembly, monomer. Homodimer. Interacts with RNF139. Interacts with DERL1 and XBP1 isoform 1. As to expression, widely expressed with highest levels in liver and kidney. In the brain, expressed predominantly in hippocampus, amygdala, piriform cortex, choroid plexus and arcuate nucleus of the hypothalamic area. Isoform 1 is more strongly expressed than isoform 4 in most tissues except brain and skeletal muscle where isoform 4 is the dominant isoform and in testis where isoform 1 and isoform 4 are expressed at similar levels. In the brain, isoform 4 is not detected in the choroid plexus.

It localises to the endoplasmic reticulum membrane. It is found in the membrane. The protein resides in the cell membrane. Functionally, catalyzes intramembrane proteolysis of signal peptides that have been removed from precursors of secretory and membrane proteins, resulting in the release of the fragment from the ER membrane into the cytoplasm. Required to generate lymphocyte cell surface (HLA-E) epitopes derived from MHC class I signal peptides. Involved in the intramembrane cleavage of the integral membrane protein PSEN1. Cleaves the integral membrane protein XBP1 isoform 1 in a DERL1/RNF139-dependent manner. May play a role in graft rejection. This Mus musculus (Mouse) protein is Signal peptide peptidase.